The sequence spans 363 residues: DNA replication and repair protein RecF (363 aa).

30 to 37 contacts ATP; the sequence is GDNAQGKT.

It belongs to the RecF family.

The protein localises to the cytoplasm. In terms of biological role, the RecF protein is involved in DNA metabolism; it is required for DNA replication and normal SOS inducibility. RecF binds preferentially to single-stranded, linear DNA. It also seems to bind ATP. The protein is DNA replication and repair protein RecF of Syntrophotalea carbinolica (strain DSM 2380 / NBRC 103641 / GraBd1) (Pelobacter carbinolicus).